The chain runs to 338 residues: MESRTDLISEKQCGCTYSNPDLAVQQESSSRWLVADVESLLGLPFNDLIFQAQTVHRQYHDANGVQLSTLLSVKTGGCSEDCAYCPQAARYHTGVENQAILSREEVVMAATKAKESGATRFCMGAAWRGPKQRDIEHMTELISAVKDLGLETCATLGILKPGQAVQLKQAGLDYYNHNLDTSPEFYGEVITTREYQNRLDTLDEVRGANINVCCGGIVGMGESRTARAGLIAQLASLDPYPESVPINYLVQVEGTPLYGIPELDPFEFVRSIAAARITMPRAKVRLSAGRRQMSEAIQALCFLAGANSIFYGDKLLTTGNPDTEQDAALLEKLGLHAL.

A Radical SAM core domain is found at 63-290 (NGVQLSTLLS…RAKVRLSAGR (228 aa)). The [4Fe-4S] cluster site is built by C78, C82, and C85. 4 residues coordinate [2Fe-2S] cluster: C122, C153, C213, and R285.

The protein belongs to the radical SAM superfamily. Biotin synthase family. Homodimer. It depends on [4Fe-4S] cluster as a cofactor. The cofactor is [2Fe-2S] cluster.

It carries out the reaction (4R,5S)-dethiobiotin + (sulfur carrier)-SH + 2 reduced [2Fe-2S]-[ferredoxin] + 2 S-adenosyl-L-methionine = (sulfur carrier)-H + biotin + 2 5'-deoxyadenosine + 2 L-methionine + 2 oxidized [2Fe-2S]-[ferredoxin]. It participates in cofactor biosynthesis; biotin biosynthesis; biotin from 7,8-diaminononanoate: step 2/2. In terms of biological role, catalyzes the conversion of dethiobiotin (DTB) to biotin by the insertion of a sulfur atom into dethiobiotin via a radical-based mechanism. The polypeptide is Biotin synthase (Nitrosomonas eutropha (strain DSM 101675 / C91 / Nm57)).